A 219-amino-acid chain; its full sequence is Elongation factor Ts (219 aa).

The involved in Mg(2+) ion dislocation from EF-Tu stretch occupies residues 82–85; that stretch reads TDFV.

This sequence belongs to the EF-Ts family.

It is found in the cytoplasm. Associates with the EF-Tu.GDP complex and induces the exchange of GDP to GTP. It remains bound to the aminoacyl-tRNA.EF-Tu.GTP complex up to the GTP hydrolysis stage on the ribosome. This Anaeromyxobacter sp. (strain Fw109-5) protein is Elongation factor Ts.